Here is an 804-residue protein sequence, read N- to C-terminus: Cyclic di-GMP-binding protein (804 aa).

The first 18 residues, 1–18 (MKMVSLIALLVFATGAQA), serve as a signal peptide directing secretion. The Periplasmic portion of the chain corresponds to 19-766 (APIASKAPAH…DWYMHNHPFR (748 aa)). Residues 24–69 (KAPAHQPTGSDLPPLPAAAPVAPAAQPSAQAVDPASAAPASDAGSA) are disordered. Residues 767–787 (VIVVGLVGCLLVVAVLVRALF) form a helical membrane-spanning segment. At 788 to 804 (RHAMFRRRQLQEERQKS) the chain is on the cytoplasmic side.

It belongs to the AcsB/BcsB family. Tightly associated with the cellulose synthase catalytic subunit.

The protein resides in the cell inner membrane. Its pathway is glycan metabolism; bacterial cellulose biosynthesis. In terms of biological role, binds the cellulose synthase activator, bis-(3'-5') cyclic diguanylic acid (c-di-GMP). This Komagataeibacter xylinus (Gluconacetobacter xylinus) protein is Cyclic di-GMP-binding protein (bcsBI).